Consider the following 333-residue polypeptide: Anthranilate phosphoribosyltransferase (333 aa).

5-phospho-alpha-D-ribose 1-diphosphate is bound by residues Gly80, 83 to 84 (GD), Thr88, 90 to 93 (NLST), 108 to 116 (KHGNRSASG), and Ser120. Position 80 (Gly80) interacts with anthranilate. Mg(2+) is bound at residue Ser92. Asn111 is an anthranilate binding site. Position 166 (Arg166) interacts with anthranilate. Asp224 and Glu225 together coordinate Mg(2+).

The protein belongs to the anthranilate phosphoribosyltransferase family. Homodimer. Mg(2+) is required as a cofactor.

The catalysed reaction is N-(5-phospho-beta-D-ribosyl)anthranilate + diphosphate = 5-phospho-alpha-D-ribose 1-diphosphate + anthranilate. Its pathway is amino-acid biosynthesis; L-tryptophan biosynthesis; L-tryptophan from chorismate: step 2/5. Catalyzes the transfer of the phosphoribosyl group of 5-phosphorylribose-1-pyrophosphate (PRPP) to anthranilate to yield N-(5'-phosphoribosyl)-anthranilate (PRA). This chain is Anthranilate phosphoribosyltransferase, found in Pyrobaculum aerophilum (strain ATCC 51768 / DSM 7523 / JCM 9630 / CIP 104966 / NBRC 100827 / IM2).